A 280-amino-acid chain; its full sequence is F420-dependent methylenetetrahydromethanopterin dehydrogenase (280 aa).

This sequence belongs to the MTD family.

It carries out the reaction 5,10-methylenetetrahydromethanopterin + oxidized coenzyme F420-(gamma-L-Glu)(n) + 2 H(+) = 5,10-methenyl-5,6,7,8-tetrahydromethanopterin + reduced coenzyme F420-(gamma-L-Glu)(n). It functions in the pathway one-carbon metabolism; methanogenesis from CO(2); 5,10-methylene-5,6,7,8-tetrahydromethanopterin from 5,10-methenyl-5,6,7,8-tetrahydromethanopterin (coenzyme F420 route): step 1/1. Functionally, catalyzes the reversible reduction of methenyl-H(4)MPT(+) to methylene-H(4)MPT. In Methanospirillum hungatei JF-1 (strain ATCC 27890 / DSM 864 / NBRC 100397 / JF-1), this protein is F420-dependent methylenetetrahydromethanopterin dehydrogenase.